Here is a 644-residue protein sequence, read N- to C-terminus: Sodium/hydrogen exchanger 9 (644 aa).

Residues 1–20 (MERQRRFMSEKDEYQFQHQG) are Lumenal-facing. The chain crosses the membrane as a helical span at residues 21 to 41 (AVELLVFNFLLILTILTIWLF). Over 42 to 45 (KNHR) the chain is Cytoplasmic. Residues 46 to 66 (FRFLHETGGAMVYGLIMGLIL) form a helical membrane-spanning segment. At 67–126 (RYATAPTDIESGTVYDCGKLAFSPSTLLINITDQVYEYKYKREISQHNINPHLGNAILEK) the chain is on the lumenal side. A helical transmembrane segment spans residues 127–147 (MTFDPEIFFNVLLPPIIFHAG). At 148-164 (YSLKKRHFFQNLGSILT) the chain is on the cytoplasmic side. Residues 165–185 (YAFLGTAISCIVIGLIMYGFV) form a helical membrane-spanning segment. Topologically, residues 186-203 (KAMVYAGQLKNGDFHFTD) are lumenal. A helical transmembrane segment spans residues 204–224 (CLFFGSLMSATDPVTVLAIFH). Topologically, residues 225 to 235 (ELHVDPDLYTL) are cytoplasmic. A helical membrane pass occupies residues 236–256 (LFGESVLNDAVAIVLTYSISI). Over 257–277 (YSPKENPNAFDAAAFFQSVGN) the chain is Lumenal. A helical transmembrane segment spans residues 278-298 (FLGIFAGSFAMGSAYAVVTAL). The Cytoplasmic segment spans residues 299-301 (LTK). The next 2 helical transmembrane spans lie at 302–322 (FTKLCEFPMLETGLFFLLSWS) and 323–343 (AFLSAEAAGLTGIVAVLFCGV). The Cytoplasmic segment spans residues 344-364 (TQAHYTYNNLSLDSKMRTKQL). The chain crosses the membrane as a helical span at residues 365–385 (FEFMNFLAENVIFCYMGLALF). Residue Thr-386 is a topological domain, lumenal. A helical transmembrane segment spans residues 387 to 407 (FQNHIFNALFILGAFLAIFVA). At 408–429 (RACNIYPLSFLLNLGRKHKIPW) the chain is on the cytoplasmic side. Residues 430 to 450 (NFQHMMMFSGLRGAIAFALAI) traverse the membrane as a helical segment. Topologically, residues 451 to 465 (RDTESQPKQMMFSTT) are lumenal. A helical transmembrane segment spans residues 466-486 (LLLVFFTVWVFGGGTTPMLTW). Residues 487-644 (LQIRVGVDLD…EQTPGQSQLN (158 aa)) lie on the Cytoplasmic side of the membrane. The disordered stretch occupies residues 593–622 (QAASPCSPPTRLGLDQKAAPQTPGKENIYE).

The protein belongs to the monovalent cation:proton antiporter 1 (CPA1) transporter (TC 2.A.36) family. As to quaternary structure, homodimer; phosphatidylinositol-4,5-bisphosphate (PIP2) and phosphatidylinositol 3,4,5-trisphosphate (PIP3) could be involved in the dimer stabilization. Interacts (via the C-terminus) with RACK1. Interacts with CHP1.

The protein resides in the late endosome membrane. The protein localises to the early endosome membrane. Its subcellular location is the recycling endosome membrane. It is found in the cell membrane. It localises to the cytoplasmic vesicle. The protein resides in the phagosome membrane. It catalyses the reaction Na(+)(in) + H(+)(out) = Na(+)(out) + H(+)(in). The enzyme catalyses K(+)(in) + H(+)(out) = K(+)(out) + H(+)(in). Its function is as follows. Endosomal Na(+), K(+)/H(+) antiporter. Mediates the electroneutral exchange of endosomal luminal H(+) for a cytosolic Na(+) or K(+). By facilitating proton efflux, SLC9A9 counteracts the acidity generated by vacuolar (V)-ATPase, thereby limiting luminal acidification. Regulates organellar pH and consequently, endosome maturation and endocytic trafficking of plasma membrane receptors and neurotransporters. Promotes the recycling of transferrin receptors back to the cell surface to facilitate additional iron uptake in the brain. Regulates synaptic transmission by regulating the luminal pH of axonal endosomes. Regulates phagosome lumenal pH, thus affecting phagosome maturation, and consequently, microbicidal activity in macrophages. Can also be active at the cell surface of specialized cells, e.g., in the inner ear hair bundles uses the high K(+) of the endolymph to regulate intracelular pH. The protein is Sodium/hydrogen exchanger 9 (SLC9A9) of Equus caballus (Horse).